The sequence spans 188 residues: CXXC-type zinc finger protein 4 (188 aa).

The disordered stretch occupies residues 1 to 20; sequence MHRNDSQRLGKPGGAPESLQ. Residues 122–163 form a CXXC-type zinc finger; sequence AKKKRKRCGVCVPCKRLINCGVCSSCRNRKTGHQICKFRKCE. Residues C129, C132, C135, C141, C144, C147, C157, and C162 each contribute to the Zn(2+) site.

The protein localises to the cytoplasm. Functionally, acts as a negative regulator of the Wnt signaling pathway required for anterior neural structure formation. Binds preferentially to DNA containing cytidine-phosphate-guanosine (CpG) dinucleotides over CpH (H=A, T, and C), hemimethylated-CpG and hemimethylated-hydroxymethyl-CpG. The sequence is that of CXXC-type zinc finger protein 4 (cxxc4) from Xenopus tropicalis (Western clawed frog).